We begin with the raw amino-acid sequence, 219 residues long: MTDSDESSWIHWFCKQRGNEFFCEVDEEYIQDKFNLNFLDSNVKNYKCALEVILDLNPGSASEDPAEPELEASAEKLYGLIHARFILTNRGIELMLDKYNKGEFGTCPRAFCHSQPVLPIGLSDNPGEDMVRIYCPKCNDVYIPKASRHSNLDGAFFGTGFPHMFFMEKPDARPKRAKQKFVPRLYGFKIHPTAYRTAAEIQKDVTMTPVGEIDSPSHI.

The residue at position 2 (Thr2) is a Phosphothreonine; by autocatalysis.

The protein belongs to the casein kinase 2 subunit beta family. In terms of assembly, tetramer of two alpha and two beta' subunits. Post-translationally, phosphorylated by alpha subunit.

Its function is as follows. Participates in Wnt signaling. Plays a complex role in regulating the basal catalytic activity of the alpha subunit. The chain is Casein kinase II subunit beta' (CkIIbeta2) from Drosophila melanogaster (Fruit fly).